A 422-amino-acid chain; its full sequence is Probable glycosidase CRR1 (422 aa).

An N-terminal signal peptide occupies residues Met-1–Gly-20. Residues Asp-67–Lys-339 enclose the GH16 domain. The active-site Nucleophile is the Glu-217. The active-site Proton donor is Glu-221.

Belongs to the glycosyl hydrolase 16 family. CRR1 subfamily.

The protein resides in the spore wall. Its function is as follows. Spore specific glycosidase involved in spore wall assembly during sporulation. May be involved in copper import. This chain is Probable glycosidase CRR1 (CRR1), found in Saccharomyces cerevisiae (strain ATCC 204508 / S288c) (Baker's yeast).